The sequence spans 496 residues: Cytochrome P450 71B12 (496 aa).

A helical transmembrane segment spans residues 2–22 (SLWYIIVAFVFFSSMIIVRII). Residue Cys436 coordinates heme.

This sequence belongs to the cytochrome P450 family. It depends on heme as a cofactor.

The protein localises to the membrane. This Arabidopsis thaliana (Mouse-ear cress) protein is Cytochrome P450 71B12 (CYP71B12).